Consider the following 451-residue polypeptide: FAD-dependent monooxygenase adrH (451 aa).

FAD is bound by residues E39, G53, and R112. Residue Y196 is part of the active site. FAD contacts are provided by D288 and A301. A glycan (N-linked (GlcNAc...) asparagine) is linked at N385. A helical membrane pass occupies residues 426 to 446; the sequence is TLLWVSSLALFLFFPWLGSYL.

The protein belongs to the paxM FAD-dependent monooxygenase family. The cofactor is FAD.

The protein localises to the membrane. It participates in secondary metabolite biosynthesis; terpenoid biosynthesis. Functionally, FAD-dependent monooxygenase; part of the gene cluster that mediates the biosynthesis of andrastins, meroterpenoid compounds that exhibit inhibitory activity against ras farnesyltransferase, suggesting that they could be promising leads for antitumor agents. The first step of the pathway is the synthesis of 3,5-dimethylorsellinic acid (DMOA) by the polyketide synthase adrD via condensation of one acetyl-CoA starter unit with 3 malonyl-CoA units and 2 methylations. DMAO is then converted to farnesyl-DMAO by the prenyltransferase adrG. The methyltransferase adrK catalyzes the methylation of the carboxyl group of farnesyl-DMAO to farnesyl-DMAO methyl ester which is further converted to epoxyfarnesyl-DMAO methyl ester by the FAD-dependent monooxygenase adrH. The terpene cyclase adrI then catalyzes the carbon skeletal rearrangement to generate the andrastin E, the first compound in the pathway having the andrastin scaffold, with the tetracyclic ring system. The post-cyclization tailoring enzymes adrF, adrE, adrJ, and adrA, are involved in the conversion of andrastin E into andrastin A. The short chain dehydrogenase adrF is responsible for the oxidation of the C-3 a hydroxyl group of andrastin E to yield the corresponding ketone, andrastin D. The ketoreductase adrE stereoselectively reduces the carbonyl moiety to reverse the stereochemistry of the C-3 position to yield andrastin F. The acetyltransferase adrJ is the acetyltransferase that attaches the acetyl group to the C-3 hydroxyl group of andrastin F to yield andrastin C. Finally, the cytochrome P450 monooxygenase adrA catalyzes two sequential oxidation reactions of the C-23 methyl group, to generate the corresponding alcohol andrastin B, and aldehyde andrastin A. This chain is FAD-dependent monooxygenase adrH, found in Penicillium rubens (strain ATCC 28089 / DSM 1075 / NRRL 1951 / Wisconsin 54-1255) (Penicillium chrysogenum).